The sequence spans 464 residues: MTFRIEKDTMGEVQVPADKYWAAQTERSRNNFKIGPEASMPKEIIEAFGYLKKAAAYANHDLGVLPVEKRDLIAQACDEILANKLDDQFPLVIWQTGSGTQSNMNLNEVISNRAHVLNGGKLGEKSIIHPNDDVNKSQSSNDTYPTAMHIAAYKKVVEVTIPCVERLQKTLAQKADAFKDVVKIGRTHLMDATPLTLGQEFSAYAAQLDFGLRALKNTLPHLAQLALGGTAVGTGLNTPKGYDVKVADYIAKFTGLPFITAENKFEALATHDAVVETHGALKQLAVSLYKIANDIRLLASGPRSGIGEILIPENEPGSSIMPGKVNPTQCEAMTMVCAQVLGNDTTISFAGTQGHFQLNVFKPVMAANFLQSAQLLADACVSFDEHCAVGIEPNFPRIKKQLDDSLMLVTALNTHIGYENAAKIAKTAHKNGTTLKEEAINLGLVTAEQFDEWVRPEDMVGSLK.

Substrate is bound by residues 98–100 (SGT), 129–132 (HPND), 139–141 (SSN), and Thr-187. His-188 serves as the catalytic Proton donor/acceptor. Residue Ser-318 is part of the active site. Substrate is bound by residues Ser-319 and 324–326 (KVN).

Belongs to the class-II fumarase/aspartase family. Fumarase subfamily. In terms of assembly, homotetramer.

The protein resides in the cytoplasm. It carries out the reaction (S)-malate = fumarate + H2O. It functions in the pathway carbohydrate metabolism; tricarboxylic acid cycle; (S)-malate from fumarate: step 1/1. Involved in the TCA cycle. Catalyzes the stereospecific interconversion of fumarate to L-malate. The chain is Fumarate hydratase class II from Pasteurella multocida (strain Pm70).